The sequence spans 314 residues: MKKNPKISLIGSGNIGGTLAHLISIKELGDIVLFDVAEGVPQGKALDLMQAGTMLGSDIKIKGSNNYKDIEGSDAIIITAGLPRKPGMSRDDLISVNTKIMKDVAQNIKKYAPSAFVIVITNPLDVMVYVILKESGLPHNKVIGMAGVLDSSRFNLFLAEEFKVSVNSVNSIVLGGHGEAMVPLARYSTVSGIPIPDLIKMGLSSNENIEKIIDRTRNGGGEIVALLKTGSAYYAPATSAIEMLESYLKDKRQILTCAAYLQGEYGIHDLYVGVPIIIGTEGVLNVIELQLTKEEKALFDKSVEGVRKLIEMVK.

Residues 11 to 16 and Asp-35 each bind NAD(+); that span reads GSGNIG. Arg-84 and Arg-90 together coordinate substrate. NAD(+)-binding positions include Asn-97 and 120 to 122; that span reads ITN. Substrate is bound by residues Asn-122 and Arg-153. Catalysis depends on His-177, which acts as the Proton acceptor.

The protein belongs to the LDH/MDH superfamily. MDH type 3 family.

The enzyme catalyses (S)-malate + NAD(+) = oxaloacetate + NADH + H(+). Its function is as follows. Catalyzes the reversible oxidation of malate to oxaloacetate. The chain is Malate dehydrogenase from Rickettsia canadensis (strain McKiel).